We begin with the raw amino-acid sequence, 466 residues long: Cysteine--tRNA ligase (466 aa).

Zn(2+) is bound at residue Cys-28. Positions 30–40 (PTVYNFFHIGN) match the 'HIGH' region motif. The Zn(2+) site is built by Cys-208, His-233, and Glu-237. The 'KMSKS' region motif lies at 265–269 (KMSKS). ATP is bound at residue Lys-268.

The protein belongs to the class-I aminoacyl-tRNA synthetase family. Monomer. Zn(2+) is required as a cofactor.

Its subcellular location is the cytoplasm. The catalysed reaction is tRNA(Cys) + L-cysteine + ATP = L-cysteinyl-tRNA(Cys) + AMP + diphosphate. This Clostridium perfringens (strain ATCC 13124 / DSM 756 / JCM 1290 / NCIMB 6125 / NCTC 8237 / Type A) protein is Cysteine--tRNA ligase.